Reading from the N-terminus, the 492-residue chain is Pyrin and HIN domain-containing protein 1 (492 aa).

Positions 1-88 (MANNYKKIVL…AETLKREKLK (88 aa)) constitute a Pyrin domain. Disordered stretches follow at residues 106 to 199 (KTKQ…KPLA) and 400 to 492 (KNTN…PAVP). Residues 142 to 159 (PSEEETGTKRSKMSKEQT) are compositionally biased toward basic and acidic residues. A compositionally biased stretch (polar residues) spans 160–173 (RPSCSAGASTSTAM). A compositionally biased stretch (low complexity) spans 181-194 (TSSSAPPNTSSTES). The 201-residue stretch at 199 to 399 (ANRHATASKN…SEMHSFIQIQ (201 aa)) folds into the HIN-200 domain. Composition is skewed to polar residues over residues 416 to 432 (QEQS…TTLP) and 460 to 492 (GAQS…PAVP).

Belongs to the HIN-200 family. In terms of assembly, interacts with MDM2. As to expression, expressed in spleen, lymph node and peripheral blood leukocytes, and at lower levels in thymus, bone marrow and fetal liver. Down-regulated in breast tumors.

Its subcellular location is the nucleus. The protein localises to the nucleoplasm. It localises to the nucleus speckle. Functionally, major mediator of the tumor suppressor activity of IFN in breast cancer cells. Promotes ubiquitination and subsequent degradation of MDM2, which leads to p53/TP53 stabilization. Promotes ubiquitination and subsequent degradation of HDAC1, which in turn enhances maspin expression, and impairs invasive activity of cancer cells. This is Pyrin and HIN domain-containing protein 1 (PYHIN1) from Homo sapiens (Human).